Reading from the N-terminus, the 387-residue chain is Anhydro-N-acetylmuramic acid kinase (387 aa).

9–16 provides a ligand contact to ATP; that stretch reads GTSVDGID.

The protein belongs to the anhydro-N-acetylmuramic acid kinase family.

The enzyme catalyses 1,6-anhydro-N-acetyl-beta-muramate + ATP + H2O = N-acetyl-D-muramate 6-phosphate + ADP + H(+). It participates in amino-sugar metabolism; 1,6-anhydro-N-acetylmuramate degradation. It functions in the pathway cell wall biogenesis; peptidoglycan recycling. Functionally, catalyzes the specific phosphorylation of 1,6-anhydro-N-acetylmuramic acid (anhMurNAc) with the simultaneous cleavage of the 1,6-anhydro ring, generating MurNAc-6-P. Is required for the utilization of anhMurNAc either imported from the medium or derived from its own cell wall murein, and thus plays a role in cell wall recycling. The sequence is that of Anhydro-N-acetylmuramic acid kinase from Synechocystis sp. (strain ATCC 27184 / PCC 6803 / Kazusa).